Reading from the N-terminus, the 617-residue chain is Dihydroxy-acid dehydratase (617 aa).

Asp81 contributes to the Mg(2+) binding site. Cys122 lines the [2Fe-2S] cluster pocket. Mg(2+) contacts are provided by Asp123 and Lys124. Residue Lys124 is modified to N6-carboxylysine. Cys195 is a binding site for [2Fe-2S] cluster. Glu491 is a Mg(2+) binding site. The active-site Proton acceptor is the Ser517.

The protein belongs to the IlvD/Edd family. As to quaternary structure, homodimer. The cofactor is [2Fe-2S] cluster. Mg(2+) is required as a cofactor.

The catalysed reaction is (2R)-2,3-dihydroxy-3-methylbutanoate = 3-methyl-2-oxobutanoate + H2O. It carries out the reaction (2R,3R)-2,3-dihydroxy-3-methylpentanoate = (S)-3-methyl-2-oxopentanoate + H2O. It participates in amino-acid biosynthesis; L-isoleucine biosynthesis; L-isoleucine from 2-oxobutanoate: step 3/4. Its pathway is amino-acid biosynthesis; L-valine biosynthesis; L-valine from pyruvate: step 3/4. Its function is as follows. Functions in the biosynthesis of branched-chain amino acids. Catalyzes the dehydration of (2R,3R)-2,3-dihydroxy-3-methylpentanoate (2,3-dihydroxy-3-methylvalerate) into 2-oxo-3-methylpentanoate (2-oxo-3-methylvalerate) and of (2R)-2,3-dihydroxy-3-methylbutanoate (2,3-dihydroxyisovalerate) into 2-oxo-3-methylbutanoate (2-oxoisovalerate), the penultimate precursor to L-isoleucine and L-valine, respectively. The chain is Dihydroxy-acid dehydratase from Buchnera aphidicola subsp. Acyrthosiphon pisum (strain 5A).